The sequence spans 327 residues: Leucotoxin LukDv (327 aa).

The N-terminal stretch at 1-26 (MKMKKLVKSSVASSIALLLLSNTVDA) is a signal peptide.

It belongs to the aerolysin family. In terms of assembly, toxicity requires sequential binding and synergistic association of a class S and a class F component which form heterooligomeric complexes. LukEv (class S) associates with LukDv (class F).

The protein resides in the secreted. Functionally, part of a bi-component leucotoxin that acts by forming pores in the membrane of the target cells. The activity of LukEv-LukDv to rabbit leukocytes is similar to that of the Panton-Valentine leucocidin (PVL). LukEv-LukDv is hemolytic to rabbit red blood cells although the activity is only 8% of gamma-hemolysin. This Staphylococcus aureus (strain NCTC 8325 / PS 47) protein is Leucotoxin LukDv (lukDv).